Here is a 232-residue protein sequence, read N- to C-terminus: Large ribosomal subunit protein uL1 (232 aa).

Belongs to the universal ribosomal protein uL1 family. As to quaternary structure, part of the 50S ribosomal subunit.

Its function is as follows. Binds directly to 23S rRNA. The L1 stalk is quite mobile in the ribosome, and is involved in E site tRNA release. Functionally, protein L1 is also a translational repressor protein, it controls the translation of the L11 operon by binding to its mRNA. The polypeptide is Large ribosomal subunit protein uL1 (Stenotrophomonas maltophilia (strain K279a)).